The sequence spans 242 residues: Ribosomal RNA large subunit methyltransferase E (242 aa).

Residues G88, W90, D111, D127, and D151 each coordinate S-adenosyl-L-methionine. K191 serves as the catalytic Proton acceptor.

The protein belongs to the class I-like SAM-binding methyltransferase superfamily. RNA methyltransferase RlmE family.

The protein localises to the cytoplasm. It catalyses the reaction uridine(2552) in 23S rRNA + S-adenosyl-L-methionine = 2'-O-methyluridine(2552) in 23S rRNA + S-adenosyl-L-homocysteine + H(+). Its function is as follows. Specifically methylates the uridine in position 2552 of 23S rRNA at the 2'-O position of the ribose in the fully assembled 50S ribosomal subunit. In Bartonella tribocorum (strain CIP 105476 / IBS 506), this protein is Ribosomal RNA large subunit methyltransferase E.